The sequence spans 156 residues: Small ribosomal subunit protein uS7 (156 aa).

This sequence belongs to the universal ribosomal protein uS7 family. Part of the 30S ribosomal subunit. Contacts proteins S9 and S11.

Functionally, one of the primary rRNA binding proteins, it binds directly to 16S rRNA where it nucleates assembly of the head domain of the 30S subunit. Is located at the subunit interface close to the decoding center, probably blocks exit of the E-site tRNA. This chain is Small ribosomal subunit protein uS7, found in Deinococcus geothermalis (strain DSM 11300 / CIP 105573 / AG-3a).